A 270-amino-acid chain; its full sequence is Probable inositol 1-monophosphatase ImpA (270 aa).

Mg(2+) is bound by residues Glu-69, Asp-85, Ile-87, and Asp-88. A substrate-binding site is contributed by Glu-69. Residues Ile-87–Thr-90, Arg-187, and Asp-216 contribute to the substrate site. Position 216 (Asp-216) interacts with Mg(2+).

This sequence belongs to the inositol monophosphatase superfamily. The cofactor is Mg(2+).

The catalysed reaction is a myo-inositol phosphate + H2O = myo-inositol + phosphate. It functions in the pathway polyol metabolism; myo-inositol biosynthesis; myo-inositol from D-glucose 6-phosphate: step 2/2. In terms of biological role, catalyzes the dephosphorylation of inositol 1-phosphate (I-1-P) to yield free myo-inositol, a key metabolite in mycobacteria. The sequence is that of Probable inositol 1-monophosphatase ImpA (impA) from Mycobacterium tuberculosis (strain ATCC 25618 / H37Rv).